The following is a 426-amino-acid chain: Serine/threonine-protein kinase SRPK (426 aa).

A compositionally biased stretch (basic and acidic residues) spans 1-23 (MENIFKEKEKGKEKAKEEEKEND). Residues 1–40 (MENIFKEKEKGKEKAKEEEKENDSGDLFDSEDEGTEDYKK) are disordered. Over residues 24–35 (SGDLFDSEDEGT) the composition is skewed to acidic residues. The 364-residue stretch at 56-419 (YRIVKKLGWG…ARDSLEHPYM (364 aa)) folds into the Protein kinase domain. Residues 62 to 70 (LGWGHFSTV) and Lys86 contribute to the ATP site. Asp188 (proton acceptor) is an active-site residue. The Nuclear localization signal signature appears at 318 to 328 (PKKGDKYDKTD).

Belongs to the protein kinase superfamily. CMGC Ser/Thr protein kinase family.

It localises to the nucleus. It carries out the reaction L-seryl-[protein] + ATP = O-phospho-L-seryl-[protein] + ADP + H(+). It catalyses the reaction L-threonyl-[protein] + ATP = O-phospho-L-threonyl-[protein] + ADP + H(+). In terms of biological role, phosphorylates serine/arginine-rich protein PSR. The chain is Serine/threonine-protein kinase SRPK from Physarum polycephalum (Slime mold).